A 553-amino-acid polypeptide reads, in one-letter code: MAGAGLRAAARRWLLCGGQGGPRAASSSPSCPGCGPPGPGAHCPSTPRSAPADGADLSAHLWARYQDMRRLVHDLLPPEVCSLLNPAAIYANNEISLSDVEVYGFDYDYTLAQYADALHPEIFSAARDILIEHYKYPEGIRKYDYDPSFAIRGLHYDIQKSLLMKIDAFHYVQLGTAYRGLQPVPDDEVVDLYGGTQHIPLYQMSGFYGKGPSIKQFMDIFSLPEMALLSCVVDYFLGHGLEFDQVHLYKDVTDAIRDVHVKGLMYQWIEQDMEKYILRGDETFAVLSRLVAHGKQLFLITNSPFSFVDKGMRHMVGPDWRQLFDVVIVQADKPNFFTDRRKPFRKLDEKGSLHWDRITRLEKGKIYRQGNLFDFLRLTEWRGPRVLYFGDHLYSDLADLMLRHGWRTGAIIPELEREIRIINTEQYMHSLTWQQALTGLLERMQTYQDAESRQVLATWMKERQELRCITKALFNAQFGSIFRTFHNPTYFSRRLVRFSDLYMASLSCLLNYSVDFTFYPRRTPLQHEAPLWMDQLCTGCMKTPFLGDMAHIR.

Residues 26 to 51 (SSSPSCPGCGPPGPGAHCPSTPRSAP) form a disordered region. Aspartate 106 functions as the Nucleophile in the catalytic mechanism. 3 residues coordinate Mg(2+): aspartate 106, aspartate 108, and aspartate 391. The Proton donor role is filled by aspartate 108.

Belongs to the 5'(3')-deoxyribonucleotidase family. In terms of assembly, interacts with tyrosine 3-monooxygenase TH; the interaction results in reduced phosphorylation and decreased catalytic activity of TH. As to expression, expressed in eye iridocorneal angle.

Its subcellular location is the cytoplasm. Functionally, promotes dephosphorylation of tyrosine 3-monooxygenase TH which decreases TH catalytic activity and leads to reduced synthesis of catecholamines including dopamine, noradrenaline and adrenaline. The exact mechanism of activity is unknown but may act as a phosphatase or promote the activity of phosphatases or may inhibit phosphorylation by acting as a barrier to interfere with protein kinase access. The polypeptide is 5'-nucleotidase domain-containing protein 2 (Nt5dc2) (Rattus norvegicus (Rat)).